Here is a 382-residue protein sequence, read N- to C-terminus: Homoserine O-acetyltransferase (382 aa).

An AB hydrolase-1 domain is found at 50–360 (NAVLICHALT…DKGHDAFLLD (311 aa)). The active-site Nucleophile is the serine 155. Arginine 225 contacts substrate. Residues aspartate 321 and histidine 354 contribute to the active site. Aspartate 355 is a binding site for substrate.

Belongs to the AB hydrolase superfamily. MetX family. In terms of assembly, homodimer.

It localises to the cytoplasm. The catalysed reaction is L-homoserine + acetyl-CoA = O-acetyl-L-homoserine + CoA. It participates in amino-acid biosynthesis; L-methionine biosynthesis via de novo pathway; O-acetyl-L-homoserine from L-homoserine: step 1/1. Functionally, transfers an acetyl group from acetyl-CoA to L-homoserine, forming acetyl-L-homoserine. This is Homoserine O-acetyltransferase from Caulobacter vibrioides (strain ATCC 19089 / CIP 103742 / CB 15) (Caulobacter crescentus).